A 470-amino-acid chain; its full sequence is Aminodeoxychorismate synthase component 1 (470 aa).

It belongs to the anthranilate synthase component I family. As to quaternary structure, monomer. Heterodimer consisting of two non-identical subunits: a glutamine amidotransferase subunit (PabA) and a aminodeoxychorismate synthase subunit (PabB). Requires Mg(2+) as cofactor.

It catalyses the reaction chorismate + L-glutamine = 4-amino-4-deoxychorismate + L-glutamate. Its pathway is cofactor biosynthesis; tetrahydrofolate biosynthesis; 4-aminobenzoate from chorismate: step 1/2. Functionally, part of a heterodimeric complex that catalyzes the two-step biosynthesis of 4-amino-4-deoxychorismate (ADC), a precursor of p-aminobenzoate (PABA) and tetrahydrofolate. In the first step, a glutamine amidotransferase (PabA) generates ammonia as a substrate that, along with chorismate, is used in the second step, catalyzed by aminodeoxychorismate synthase (PabB) to produce ADC. This is Aminodeoxychorismate synthase component 1 (pabB) from Bacillus subtilis (strain 168).